The chain runs to 157 residues: UPF0251 protein CLM_1546 (157 aa).

It belongs to the UPF0251 family.

The protein is UPF0251 protein CLM_1546 of Clostridium botulinum (strain Kyoto / Type A2).